The sequence spans 354 residues: Probable calcium-binding protein CML50 (354 aa).

Low complexity-rich tracts occupy residues 1 to 10 (MSGYPPTSQG) and 28 to 71 (YSSG…SSYG). The segment at 1–159 (MSGYPPTSQG…PASSGHGGGY (159 aa)) is disordered. The segment covering 72–81 (APPPSAPYAP) has biased composition (pro residues). Residues 106–117 (GSSDYGSYGAGP) show a composition bias toward low complexity. EF-hand domains follow at residues 183–218 (GTDPNIVACFQAADQDGSGFIDDKELQGALSSYQQR) and 249–284 (YSLQNWRSIFERSDKDRSGRIDVNELRDALLSLGFS). Residues Asp-196, Asp-198, Ser-200, Glu-207, Asp-262, Asp-264, Ser-266, Arg-268, and Glu-273 each coordinate Ca(2+).

Its function is as follows. Potential calcium sensor. The sequence is that of Probable calcium-binding protein CML50 (CML50) from Arabidopsis thaliana (Mouse-ear cress).